We begin with the raw amino-acid sequence, 393 residues long: MPHFLAKLDFKPLEYPLIEGDFCFHREFLSLKNPTKSCVYASFKDRIFLLQKIRRANDFLIKSEKATPLKREVLKQALRIYSQSFEVISHNLQENSKHASGKKTLDLGTFEDFIQKNQAPILIEIGFGSGRHLIELAKNNPTKTCLGIEIHTPSIAQALKQIELLDLKNLHILQGDGRLVLESMPNHRCEKIFVHFPVPWNEKKHRRVLSEKFLNEALRVLKPRGFLELRTDDSLYFEDSLKLALKNFQCEIEIKKNAQIPVVSKYEARWNKLKKDIYDLRIYSLEWNETPFDNHAFDFSFDTITISKKSVGTILKTKKIIQEGYFVHVCNIYENKGDFLVELSMGDFDWPVRLFVLLTENQIFYLNKSPLKTLNNHKAHLLLQNILSQKGIG.

Positions 124, 149, and 176 each coordinate S-adenosyl-L-methionine. A substrate-binding site is contributed by Asp232.

The protein belongs to the class I-like SAM-binding methyltransferase superfamily. TrmB family.

The enzyme catalyses guanosine(46) in tRNA + S-adenosyl-L-methionine = N(7)-methylguanosine(46) in tRNA + S-adenosyl-L-homocysteine. It participates in tRNA modification; N(7)-methylguanine-tRNA biosynthesis. Functionally, catalyzes the formation of N(7)-methylguanine at position 46 (m7G46) in tRNA. This Helicobacter pylori (strain ATCC 700392 / 26695) (Campylobacter pylori) protein is tRNA (guanine-N(7)-)-methyltransferase.